The sequence spans 694 residues: MALLLVSLLAFLSLGSGCHHRVCHCSNRVFLCQESKVTEIPSDLPRNALELRFVLTKLRVIPKGAFSGFGDLEKIEISQNDVLEVIEANVFSNLPKLHEIRIEKANNLLYIDHDAFQNLPNLQYLLISNTGIKHLPAVHKIQSLQKVLLDIQDNINIHTVERNSFMGLSFESTILRLSKNGIQEIHNCAFNGTQLDELNLSYNNNLEELPNDVFQGASGPVILDISGTRIHSLPNYGLENLKKLRARSTYNLKKLPSLEKFVALMEANLTYPSHCCAFANWRRQTSELQTTCNKSILRQEVDMTQARGERVSLAEDDESSYPKGFDMMYSEFEYDLCNEVVDVTCSPKPDAFNPCEDIMGYDILRVLIWFISILAITGNIIVLVILITSQYKLTVPRFLMCNLAFADLCIGIYLLLIASVDIHTKSQYHNYAIDWQTGAGCDAAGFFTVFASELSVYTLTAITLERWHTITHAMQLECKVQLRHAASVMLVGWIFAFAVALLPIFGISTYMKVSICLPMDIDSPLSQLYVMSLLVLNVLAFVVICGCYIHIYLTVRNPNIVSSSSDTKIAKRMAILIFTDFLCMAPISFFAISASLKVPLITVSKSKILLVLFYPINSCANPFLYAIFTKNFRRDFFILLSKFGCYEMQAQLYRTETSSTAHISHPRNGHCPPTPRVINGANCTLVPLSHLAQN.

A signal peptide spans 1–17 (MALLLVSLLAFLSLGSG). Cystine bridges form between cysteine 18/cysteine 25 and cysteine 23/cysteine 32. The region spanning 18-46 (CHHRVCHCSNRVFLCQESKVTEIPSDLPR) is the LRRNT domain. Topologically, residues 18-365 (CHHRVCHCSN…EDIMGYDILR (348 aa)) are extracellular. LRR repeat units follow at residues 49-72 (LELR…FGDL), 73-97 (EKIE…LPKL), 98-118 (HEIR…AFQN), 119-143 (LPNL…KIQS), 144-169 (LQKV…MGLS), 170-192 (FEST…AFNG), 193-216 (TQLD…VFQG), 217-240 (ASGP…GLEN), and 241-259 (LKKL…PSLE). 2 N-linked (GlcNAc...) asparagine glycosylation sites follow: asparagine 191 and asparagine 199. N-linked (GlcNAc...) asparagine glycosylation occurs at asparagine 268. 4 disulfide bridges follow: cysteine 275-cysteine 345, cysteine 276-cysteine 292, cysteine 276-cysteine 355, and cysteine 292-cysteine 337. Residue asparagine 293 is glycosylated (N-linked (GlcNAc...) asparagine). Position 334 is a sulfotyrosine (tyrosine 334). A helical membrane pass occupies residues 366–386 (VLIWFISILAITGNIIVLVIL). Over 387–397 (ITSQYKLTVPR) the chain is Cytoplasmic. A helical transmembrane segment spans residues 398–420 (FLMCNLAFADLCIGIYLLLIASV). Residues 421–442 (DIHTKSQYHNYAIDWQTGAGCD) lie on the Extracellular side of the membrane. The cysteines at positions 441 and 516 are disulfide-linked. A helical membrane pass occupies residues 443–464 (AAGFFTVFASELSVYTLTAITL). The Cytoplasmic segment spans residues 465 to 484 (ERWHTITHAMQLECKVQLRH). Residues 485 to 507 (AASVMLVGWIFAFAVALLPIFGI) form a helical membrane-spanning segment. The Extracellular portion of the chain corresponds to 508-527 (STYMKVSICLPMDIDSPLSQ). A helical transmembrane segment spans residues 528–549 (LYVMSLLVLNVLAFVVICGCYI). At 550–572 (HIYLTVRNPNIVSSSSDTKIAKR) the chain is on the cytoplasmic side. A helical membrane pass occupies residues 573 to 596 (MAILIFTDFLCMAPISFFAISASL). Topologically, residues 597–607 (KVPLITVSKSK) are extracellular. Residues 608–629 (ILLVLFYPINSCANPFLYAIFT) traverse the membrane as a helical segment. Over 630–694 (KNFRRDFFIL…LVPLSHLAQN (65 aa)) the chain is Cytoplasmic.

This sequence belongs to the G-protein coupled receptor 1 family. FSH/LSH/TSH subfamily. As to quaternary structure, homotrimer. Functions as a homotrimer binding the FSH hormone heterodimer composed of CGA and FSHB. Interacts with ARRB2. Interacts with APPL2; interaction is independent of follicle stimulating hormone stimulation. N-glycosylated; indirectly required for FSH-binding, possibly via a conformational change that allows high affinity binding of hormone. Post-translationally, sulfated.

The protein resides in the cell membrane. G protein-coupled receptor for follitropin, the follicle-stimulating hormone. Through cAMP production activates the downstream PI3K-AKT and ERK1/ERK2 signaling pathways. The sequence is that of Follicle-stimulating hormone receptor (FSHR) from Equus caballus (Horse).